We begin with the raw amino-acid sequence, 332 residues long: Arrestin domain-containing protein 5 (332 aa).

The tract at residues 311–332 is disordered; that stretch reads SNQTAAGCRTRAPLPVSPDQQN.

The protein belongs to the arrestin family.

The protein localises to the membrane. Its function is as follows. Plays an essential role in spermatogenesis. May be involved in the anchoring of the sperm head to the tail during spermatogenesis by affecting SEC22A-mediated SUN5 and NDC1 transport and localization. The sequence is that of Arrestin domain-containing protein 5 (ARRDC5) from Bos taurus (Bovine).